Consider the following 671-residue polypeptide: DNA ligase (671 aa).

NAD(+)-binding positions include 32-36 (DAEYD), 81-82 (SL), and glutamate 113. Lysine 115 (N6-AMP-lysine intermediate) is an active-site residue. Positions 136, 173, 290, and 314 each coordinate NAD(+). Positions 408, 411, 426, and 432 each coordinate Zn(2+). One can recognise a BRCT domain in the interval 593–671 (EIDSPFAGKT…EAEMLRLLGS (79 aa)).

Belongs to the NAD-dependent DNA ligase family. LigA subfamily. Mg(2+) serves as cofactor. It depends on Mn(2+) as a cofactor.

It carries out the reaction NAD(+) + (deoxyribonucleotide)n-3'-hydroxyl + 5'-phospho-(deoxyribonucleotide)m = (deoxyribonucleotide)n+m + AMP + beta-nicotinamide D-nucleotide.. Functionally, DNA ligase that catalyzes the formation of phosphodiester linkages between 5'-phosphoryl and 3'-hydroxyl groups in double-stranded DNA using NAD as a coenzyme and as the energy source for the reaction. It is essential for DNA replication and repair of damaged DNA. The protein is DNA ligase of Shigella boydii serotype 4 (strain Sb227).